The primary structure comprises 524 residues: Bifunctional purine biosynthesis protein PurH (524 aa).

Positions 1 to 145 (MIKQALLSVS…KNHRDVTVIV (145 aa)) constitute an MGS-like domain.

It belongs to the PurH family.

The catalysed reaction is (6R)-10-formyltetrahydrofolate + 5-amino-1-(5-phospho-beta-D-ribosyl)imidazole-4-carboxamide = 5-formamido-1-(5-phospho-D-ribosyl)imidazole-4-carboxamide + (6S)-5,6,7,8-tetrahydrofolate. The enzyme catalyses IMP + H2O = 5-formamido-1-(5-phospho-D-ribosyl)imidazole-4-carboxamide. The protein operates within purine metabolism; IMP biosynthesis via de novo pathway; 5-formamido-1-(5-phospho-D-ribosyl)imidazole-4-carboxamide from 5-amino-1-(5-phospho-D-ribosyl)imidazole-4-carboxamide (10-formyl THF route): step 1/1. Its pathway is purine metabolism; IMP biosynthesis via de novo pathway; IMP from 5-formamido-1-(5-phospho-D-ribosyl)imidazole-4-carboxamide: step 1/1. This chain is Bifunctional purine biosynthesis protein PurH, found in Cupriavidus necator (strain ATCC 17699 / DSM 428 / KCTC 22496 / NCIMB 10442 / H16 / Stanier 337) (Ralstonia eutropha).